Reading from the N-terminus, the 122-residue chain is Neuropeptide B (122 aa).

An N-terminal signal peptide occupies residues M1–A24. W25 is modified (6'-bromotryptophan). Positions S56–K122 are excised as a propeptide.

This sequence belongs to the neuropeptide B/W family.

It localises to the secreted. Its function is as follows. May be involved in the regulation of feeding, neuroendocrine system, memory, learning and in the afferent pain pathway. The chain is Neuropeptide B (NPB) from Bos taurus (Bovine).